A 166-amino-acid chain; its full sequence is NAD(P)H-quinone oxidoreductase subunit I, chloroplastic (166 aa).

2 consecutive 4Fe-4S ferredoxin-type domains span residues 55 to 84 and 95 to 124; these read GRIH…VDWK and LNYS…MTEE. The [4Fe-4S] cluster site is built by cysteine 64, cysteine 67, cysteine 70, cysteine 74, cysteine 104, cysteine 107, cysteine 110, and cysteine 114.

The protein belongs to the complex I 23 kDa subunit family. NDH is composed of at least 16 different subunits, 5 of which are encoded in the nucleus. Requires [4Fe-4S] cluster as cofactor.

The protein localises to the plastid. The protein resides in the chloroplast thylakoid membrane. The enzyme catalyses a plastoquinone + NADH + (n+1) H(+)(in) = a plastoquinol + NAD(+) + n H(+)(out). It carries out the reaction a plastoquinone + NADPH + (n+1) H(+)(in) = a plastoquinol + NADP(+) + n H(+)(out). Its function is as follows. NDH shuttles electrons from NAD(P)H:plastoquinone, via FMN and iron-sulfur (Fe-S) centers, to quinones in the photosynthetic chain and possibly in a chloroplast respiratory chain. The immediate electron acceptor for the enzyme in this species is believed to be plastoquinone. Couples the redox reaction to proton translocation, and thus conserves the redox energy in a proton gradient. This chain is NAD(P)H-quinone oxidoreductase subunit I, chloroplastic, found in Polymnia canadensis (White-flowered leaf-cup).